A 271-amino-acid chain; its full sequence is Ferric vulnibactin reductase VuuB (271 aa).

The FAD-binding FR-type domain maps to 8 to 131 (VYPMLLDFVR…IGPAGPDPLI (124 aa)).

The protein belongs to the SIP oxidoreductase family. As to quaternary structure, monomer. FAD serves as cofactor.

The protein localises to the cytoplasm. The catalysed reaction is 2 a Fe(II)-siderophore + NAD(+) + H(+) = 2 a Fe(III)-siderophore + NADH. Its function is as follows. Ferric-siderophore reductase involved in iron removal from the siderophores after their transport into the cell. Acts as a major ferric-vulnibactin reductase catalyzing the reduction of Fe(3+)-vulnibactin, a catecholate siderophore synthesized by V.vulnificus. In Vibrio vulnificus (strain CMCP6), this protein is Ferric vulnibactin reductase VuuB.